Reading from the N-terminus, the 870-residue chain is Leucine--tRNA ligase (870 aa).

Residues 42–52 (PYPSGKLHMGH) carry the 'HIGH' region motif. Residues 629–633 (KMSKS) carry the 'KMSKS' region motif. Position 632 (lysine 632) interacts with ATP.

This sequence belongs to the class-I aminoacyl-tRNA synthetase family.

It is found in the cytoplasm. It carries out the reaction tRNA(Leu) + L-leucine + ATP = L-leucyl-tRNA(Leu) + AMP + diphosphate. The protein is Leucine--tRNA ligase of Ectopseudomonas mendocina (strain ymp) (Pseudomonas mendocina).